Here is a 107-residue protein sequence, read N- to C-terminus: Probable antitoxin TacA (107 aa).

The protein belongs to the TacA antitoxin family. In terms of assembly, forms a complex with cognate antitoxin TacT.

Its function is as follows. Probable antitoxin component of a type II toxin-antitoxin (TA) system. Should neutralize cognate toxin TacT (y4aS). The protein is Probable antitoxin TacA of Sinorhizobium fredii (strain NBRC 101917 / NGR234).